We begin with the raw amino-acid sequence, 270 residues long: MPGKHQHFQEPEVGCCGKYFLFGFNIVFWVLGALFLAIGLWAWGEKGVLSNISALTDLGGLDPVWLFVVVGGVMSVLGFAGCIGALRENTFLLKFFSVFLGLIFFLELATGILAFVFKDWIRDQLNLFINNNVKAYRDDIDLQNLIDFAQEYWSCCGARGPNDWNLNIYFNCTDLNPSRERCGVPFSCCVRDPAEDVLNTQCGYDVRLKLELEQQGFIHTKGCVGQFEKWLQDNLIVVAGVFMGIALLQIFGICLAQNLVSDIKAVKANW.

Over 1-19 (MPGKHQHFQEPEVGCCGKY) the chain is Cytoplasmic. A helical membrane pass occupies residues 20–40 (FLFGFNIVFWVLGALFLAIGL). The Extracellular portion of the chain corresponds to 41–63 (WAWGEKGVLSNISALTDLGGLDP). An N-linked (GlcNAc...) asparagine glycan is attached at Asn51. The chain crosses the membrane as a helical span at residues 64-84 (VWLFVVVGGVMSVLGFAGCIG). Over 85-94 (ALRENTFLLK) the chain is Cytoplasmic. Residues 95-115 (FFSVFLGLIFFLELATGILAF) traverse the membrane as a helical segment. Topologically, residues 116 to 234 (VFKDWIRDQL…GQFEKWLQDN (119 aa)) are extracellular. 4 disulfides stabilise this stretch: Cys155–Cys223, Cys156–Cys188, Cys172–Cys182, and Cys189–Cys202. Residue Asn171 is glycosylated (N-linked (GlcNAc...) asparagine). Residues 235-255 (LIVVAGVFMGIALLQIFGICL) traverse the membrane as a helical segment. At 256-270 (AQNLVSDIKAVKANW) the chain is on the cytoplasmic side.

It belongs to the tetraspanin (TM4SF) family. As to quaternary structure, interacts with ADAM10; the interaction influences ADAM10 substrate specificity, endocytosis and turnover.

It localises to the cell membrane. Functionally, part of TspanC8 subgroup, composed of 6 members that interact with the transmembrane metalloprotease ADAM10. This interaction is required for ADAM10 exit from the endoplasmic reticulum and for enzymatic maturation and trafficking to the cell surface as well as substrate specificity. Different TspanC8/ADAM10 complexes have distinct substrates. Seems to regulate VE-cadherin expression in endothelial cells probably through interaction with ADAM10, promoting leukocyte transmigration. This is Tetraspanin-17 from Homo sapiens (Human).